The following is a 125-amino-acid chain: Probable 4-amino-4-deoxy-L-arabinose-phosphoundecaprenol flippase subunit ArnF (125 aa).

At 1-2 the chain is on the cytoplasmic side; it reads MG. A helical transmembrane segment spans residues 3–23; sequence VMWGLISVAIASLAQLSLGFA. Residues 24-33 lie on the Periplasmic side of the membrane; it reads MMRLPSIAHP. The chain crosses the membrane as a helical span at residues 34–54; sequence LAFISGLGAFNAATLALFAGL. The Cytoplasmic portion of the chain corresponds to 55-76; that stretch reads AGYLVSVFCWQKTLHTLALSKA. A helical transmembrane segment spans residues 77 to 97; it reads YALLSLSYVLVWVASMLLPGL. At 98 to 100 the chain is on the periplasmic side; that stretch reads QGA. The chain crosses the membrane as a helical span at residues 101-121; sequence FSLKAMLGVLCIMAGVMLIFL. Residues 122-125 are Cytoplasmic-facing; the sequence is PARS.

The protein belongs to the ArnF family. In terms of assembly, heterodimer of ArnE and ArnF.

The protein localises to the cell inner membrane. The protein operates within bacterial outer membrane biogenesis; lipopolysaccharide biosynthesis. In terms of biological role, translocates 4-amino-4-deoxy-L-arabinose-phosphoundecaprenol (alpha-L-Ara4N-phosphoundecaprenol) from the cytoplasmic to the periplasmic side of the inner membrane. In Salmonella choleraesuis (strain SC-B67), this protein is Probable 4-amino-4-deoxy-L-arabinose-phosphoundecaprenol flippase subunit ArnF.